Here is a 339-residue protein sequence, read N- to C-terminus: Malate dehydrogenase 3, cytoplasmic (339 aa).

Residues 22–23 (NI), Asp49, and Gly96 contribute to the NAD(+) site. Residue Arg105 participates in oxaloacetate binding. NAD(+)-binding residues include Gln119 and Asn138. Positions 138, 169, 194, and 249 each coordinate oxaloacetate. Catalysis depends on His194, which acts as the Proton acceptor.

It belongs to the LDH/MDH superfamily. MDH type 2 family. As to expression, expressed in rosette leaves at low levels.

It is found in the cytoplasm. It catalyses the reaction (S)-malate + NAD(+) = oxaloacetate + NADH + H(+). Its function is as follows. Catalyzes a reversible NAD-dependent dehydrogenase reaction involved in central metabolism and redox homeostasis between organelle compartments. The protein is Malate dehydrogenase 3, cytoplasmic of Arabidopsis thaliana (Mouse-ear cress).